The sequence spans 77 residues: Sec-independent protein translocase protein TatA (77 aa).

Residues 3–23 form a helical membrane-spanning segment; that stretch reads VFGIGLPELIVILVVALLIFG. Residues 56–77 form a disordered region; the sequence is TAALEEEQQAKAEAESPREISP. Positions 63 to 77 are enriched in basic and acidic residues; that stretch reads QQAKAEAESPREISP.

It belongs to the TatA/E family. Forms a complex with TatC.

It localises to the cell inner membrane. Its function is as follows. Part of the twin-arginine translocation (Tat) system that transports large folded proteins containing a characteristic twin-arginine motif in their signal peptide across membranes. TatA could form the protein-conducting channel of the Tat system. This Thermosynechococcus vestitus (strain NIES-2133 / IAM M-273 / BP-1) protein is Sec-independent protein translocase protein TatA.